A 303-amino-acid chain; its full sequence is Holdfast attachment protein D (303 aa).

The segment covering 266 to 281 (SARSTMSGPKSCSTTF) has biased composition (polar residues). The interval 266 to 303 (SARSTMSGPKSCSTTFRPIRAAASRRPPASAGTRAMTR) is disordered. Over residues 282-303 (RPIRAAASRRPPASAGTRAMTR) the composition is skewed to low complexity.

The protein resides in the cell outer membrane. Involved in attachment of the holdfast to the cell. The holdfast is a structure that allows the bacteria to firmly adhere to surfaces. The protein is Holdfast attachment protein D (hfaD) of Caulobacter vibrioides (strain ATCC 19089 / CIP 103742 / CB 15) (Caulobacter crescentus).